The primary structure comprises 239 residues: tRNA (guanine-N(7)-)-methyltransferase (239 aa).

Positions 69, 94, 121, and 144 each coordinate S-adenosyl-L-methionine. Asp144 is an active-site residue. Lys148 provides a ligand contact to substrate. The interaction with RNA stretch occupies residues 150–155 (RHNKRR). Substrate-binding positions include Asp180 and 217-220 (TKFE).

This sequence belongs to the class I-like SAM-binding methyltransferase superfamily. TrmB family. As to quaternary structure, monomer.

It catalyses the reaction guanosine(46) in tRNA + S-adenosyl-L-methionine = N(7)-methylguanosine(46) in tRNA + S-adenosyl-L-homocysteine. The protein operates within tRNA modification; N(7)-methylguanine-tRNA biosynthesis. In terms of biological role, catalyzes the formation of N(7)-methylguanine at position 46 (m7G46) in tRNA. The chain is tRNA (guanine-N(7)-)-methyltransferase from Shigella flexneri serotype 5b (strain 8401).